A 501-amino-acid chain; its full sequence is ATP synthase subunit alpha (501 aa).

Position 169–176 (169–176 (GDRQTGKT)) interacts with ATP.

It belongs to the ATPase alpha/beta chains family. In terms of assembly, F-type ATPases have 2 components, CF(1) - the catalytic core - and CF(0) - the membrane proton channel. CF(1) has five subunits: alpha(3), beta(3), gamma(1), delta(1), epsilon(1). CF(0) has three main subunits: a(1), b(2) and c(9-12). The alpha and beta chains form an alternating ring which encloses part of the gamma chain. CF(1) is attached to CF(0) by a central stalk formed by the gamma and epsilon chains, while a peripheral stalk is formed by the delta and b chains.

It localises to the cell inner membrane. It carries out the reaction ATP + H2O + 4 H(+)(in) = ADP + phosphate + 5 H(+)(out). In terms of biological role, produces ATP from ADP in the presence of a proton gradient across the membrane. The alpha chain is a regulatory subunit. The protein is ATP synthase subunit alpha of Campylobacter lari (strain RM2100 / D67 / ATCC BAA-1060).